Here is a 273-residue protein sequence, read N- to C-terminus: 2,3,4,5-tetrahydropyridine-2,6-dicarboxylate N-succinyltransferase (273 aa).

Belongs to the transferase hexapeptide repeat family.

The protein localises to the cytoplasm. It carries out the reaction (S)-2,3,4,5-tetrahydrodipicolinate + succinyl-CoA + H2O = (S)-2-succinylamino-6-oxoheptanedioate + CoA. It participates in amino-acid biosynthesis; L-lysine biosynthesis via DAP pathway; LL-2,6-diaminopimelate from (S)-tetrahydrodipicolinate (succinylase route): step 1/3. The sequence is that of 2,3,4,5-tetrahydropyridine-2,6-dicarboxylate N-succinyltransferase from Bordetella petrii (strain ATCC BAA-461 / DSM 12804 / CCUG 43448).